A 471-amino-acid polypeptide reads, in one-letter code: Probable ribonuclease FAU-1 (471 aa).

This sequence belongs to the FAU-1 family.

Its function is as follows. Probable RNase involved in rRNA stability through maturation and/or degradation of precursor rRNAs. Binds to RNA in loop regions with AU-rich sequences. The sequence is that of Probable ribonuclease FAU-1 from Caldivirga maquilingensis (strain ATCC 700844 / DSM 13496 / JCM 10307 / IC-167).